The following is a 334-amino-acid chain: UDP-N-acetylglucosamine 4,6-dehydratase (inverting) (334 aa).

NADP(+) contacts are provided by residues 13–16 (TGSF), 37–42 (SRDELK), 61–62 (DV), A81, K85, and 123–124 (LS). K85 contacts substrate. The active site involves K127. Positions 135 and 139 each coordinate NADP(+). N167 contributes to the substrate binding site. 168–172 (VVGSR) serves as a coordination point for NADP(+). Substrate-binding residues include V175, T193, R252, and E255.

This sequence belongs to the polysaccharide synthase family. As to quaternary structure, homohexamer. It depends on NADP(+) as a cofactor.

It catalyses the reaction UDP-N-acetyl-alpha-D-glucosamine = UDP-2-acetamido-2,6-dideoxy-beta-L-arabino-hex-4-ulose + H2O. Catalyzes the first step in the biosynthesis of pseudaminic acid, a sialic-acid-like sugar that is used to modify flagellin. Has both C6 dehydratase and C5 epimerase activities that result in the production of both UDP-2-acetamido-2,6-dideoxy-beta-L-arabino-4-hexulose and UDP-2-acetamido-2,6-dideoxy-alpha-D-xylo-4-hexulose. The polypeptide is UDP-N-acetylglucosamine 4,6-dehydratase (inverting) (pseB) (Campylobacter jejuni subsp. jejuni serotype O:23/36 (strain 81-176)).